The primary structure comprises 99 residues: Nucleoid-associated protein EbfC (99 aa).

Belongs to the YbaB/EbfC family. As to quaternary structure, homodimer.

It localises to the cytoplasm. It is found in the nucleoid. Its function is as follows. Binds to DNA and alters its conformation. May be involved in regulation of gene expression, nucleoid organization and DNA protection. The chain is Nucleoid-associated protein EbfC from Borrelia duttonii (strain Ly).